The following is a 481-amino-acid chain: Glutamyl-tRNA(Gln) amidotransferase subunit A (481 aa).

Residues Lys76 and Ser151 each act as charge relay system in the active site. Ser175 serves as the catalytic Acyl-ester intermediate.

The protein belongs to the amidase family. GatA subfamily. Heterotrimer of A, B and C subunits.

The enzyme catalyses L-glutamyl-tRNA(Gln) + L-glutamine + ATP + H2O = L-glutaminyl-tRNA(Gln) + L-glutamate + ADP + phosphate + H(+). Its function is as follows. Allows the formation of correctly charged Gln-tRNA(Gln) through the transamidation of misacylated Glu-tRNA(Gln) in organisms which lack glutaminyl-tRNA synthetase. The reaction takes place in the presence of glutamine and ATP through an activated gamma-phospho-Glu-tRNA(Gln). The polypeptide is Glutamyl-tRNA(Gln) amidotransferase subunit A (Neisseria gonorrhoeae (strain ATCC 700825 / FA 1090)).